We begin with the raw amino-acid sequence, 287 residues long: Probable endonuclease LCL3 (287 aa).

The tract at residues 1-40 is disordered; sequence MPWPFGPSGSSEAPPPQKPRDDKVEGREPAKSWNSLLPKP. Residues 18–30 show a composition bias toward basic and acidic residues; sequence KPRDDKVEGREPA. The helical transmembrane segment at 50 to 67 threads the bilayer; sequence WAPVFLTAVGSLAAFMFY. The TNase-like domain maps to 88–246; it reads RSLLGRVTSV…KAKKLGLWSI (159 aa). The active site involves Arg-137. Residue Asp-142 coordinates Ca(2+). Residues Glu-145 and Arg-185 contribute to the active site. Residues 254-272 show a composition bias toward basic and acidic residues; that stretch reads PRDFKNRTQGNEKSERDVE. A disordered region spans residues 254–278; that stretch reads PRDFKNRTQGNEKSERDVEGSTVQK.

The protein belongs to the LCL3 family.

The protein localises to the mitochondrion. The protein resides in the membrane. This is Probable endonuclease LCL3 (LCL3) from Verticillium alfalfae (strain VaMs.102 / ATCC MYA-4576 / FGSC 10136) (Verticillium wilt of alfalfa).